Reading from the N-terminus, the 314-residue chain is Methionyl-tRNA formyltransferase (314 aa).

(6S)-5,6,7,8-tetrahydrofolate is bound at residue 111 to 114; sequence SLLP.

It belongs to the Fmt family.

The catalysed reaction is L-methionyl-tRNA(fMet) + (6R)-10-formyltetrahydrofolate = N-formyl-L-methionyl-tRNA(fMet) + (6S)-5,6,7,8-tetrahydrofolate + H(+). Functionally, attaches a formyl group to the free amino group of methionyl-tRNA(fMet). The formyl group appears to play a dual role in the initiator identity of N-formylmethionyl-tRNA by promoting its recognition by IF2 and preventing the misappropriation of this tRNA by the elongation apparatus. The polypeptide is Methionyl-tRNA formyltransferase (Chlorobium luteolum (strain DSM 273 / BCRC 81028 / 2530) (Pelodictyon luteolum)).